Consider the following 246-residue polypeptide: Putative carbonic anhydrase 3 (246 aa).

The Alpha-carbonic anhydrase domain maps to 3–244 (GHWSYCDDDE…LNDRKIVHIV (242 aa)). Histidine 61 functions as the Proton acceptor in the catalytic mechanism. Positions 91, 93, and 116 each coordinate Zn(2+). 187 to 188 (TT) contributes to the substrate binding site.

Belongs to the alpha-carbonic anhydrase family. Zn(2+) is required as a cofactor.

The enzyme catalyses hydrogencarbonate + H(+) = CO2 + H2O. In terms of biological role, reversible hydration of carbon dioxide. This Caenorhabditis elegans protein is Putative carbonic anhydrase 3 (cah-3).